We begin with the raw amino-acid sequence, 479 residues long: Sulfate adenylyltransferase subunit 1 (479 aa).

The tr-type G domain maps to 25–239 (KSLLRFLTCG…EVLETVDIQR (215 aa)). Positions 34–41 (GSVDDGKS) are G1. A GTP-binding site is contributed by 34–41 (GSVDDGKS). A G2 region spans residues 92-96 (GITID). A G3 region spans residues 113 to 116 (DTPG). GTP-binding positions include 113–117 (DTPGH) and 168–171 (NKMD). The tract at residues 168–171 (NKMD) is G4. Residues 206–208 (SAL) are G5.

This sequence belongs to the TRAFAC class translation factor GTPase superfamily. Classic translation factor GTPase family. CysN/NodQ subfamily. In terms of assembly, heterodimer composed of CysD, the smaller subunit, and CysN.

The catalysed reaction is sulfate + ATP + H(+) = adenosine 5'-phosphosulfate + diphosphate. It functions in the pathway sulfur metabolism; hydrogen sulfide biosynthesis; sulfite from sulfate: step 1/3. With CysD forms the ATP sulfurylase (ATPS) that catalyzes the adenylation of sulfate producing adenosine 5'-phosphosulfate (APS) and diphosphate, the first enzymatic step in sulfur assimilation pathway. APS synthesis involves the formation of a high-energy phosphoric-sulfuric acid anhydride bond driven by GTP hydrolysis by CysN coupled to ATP hydrolysis by CysD. In Salmonella paratyphi A (strain ATCC 9150 / SARB42), this protein is Sulfate adenylyltransferase subunit 1.